The chain runs to 209 residues: FMN-dependent NADH:quinone oxidoreductase (209 aa).

Residues Ser9 and 15–17 each bind FMN; that span reads SNS.

It belongs to the azoreductase type 1 family. As to quaternary structure, homodimer. Requires FMN as cofactor.

The enzyme catalyses 2 a quinone + NADH + H(+) = 2 a 1,4-benzosemiquinone + NAD(+). It catalyses the reaction N,N-dimethyl-1,4-phenylenediamine + anthranilate + 2 NAD(+) = 2-(4-dimethylaminophenyl)diazenylbenzoate + 2 NADH + 2 H(+). Quinone reductase that provides resistance to thiol-specific stress caused by electrophilic quinones. Functionally, also exhibits azoreductase activity. Catalyzes the reductive cleavage of the azo bond in aromatic azo compounds to the corresponding amines. In Bordetella bronchiseptica (strain ATCC BAA-588 / NCTC 13252 / RB50) (Alcaligenes bronchisepticus), this protein is FMN-dependent NADH:quinone oxidoreductase.